Consider the following 514-residue polypeptide: Probable WRKY transcription factor 4 (514 aa).

Disordered regions lie at residues 1–28, 175–204, and 278–394; these read MSEKEEAPSTSKSTGAPSRPTLSLPPRP, QPQTEYPPPSQVQSFSSGQAQIPTSAPLPA, and YKGQ…TVTE. Polar residues-rich tracts occupy residues 185 to 198 and 286 to 299; these read QVQSFSSGQAQIPT and PPQNTKRGNKDNTA. The WRKY 1 DNA-binding region spans 223–287; the sequence is NVDKPADDGY…YKGQHNHEPP (65 aa). Residues 300 to 313 show a composition bias toward low complexity; that stretch reads NINGSSINNNRGSS. Residues 315 to 326 show a composition bias toward polar residues; the sequence is LGASQFQTNSSN. The span at 359–380 shows a compositional bias: basic and acidic residues; sequence TDVREKDENEPDPKRRSTEVRI. Positions 403–468 form a DNA-binding region, WRKY 2; that stretch reads SEVDLLDDGY…YEGKHNHDLP (66 aa). Positions 434, 436, 439, 463, and 465 each coordinate Zn(2+). A disordered region spans residues 464–514; it reads NHDLPAAKSSSHAAAAAQLRPDNRPGGLANLNQQQQQQPVARLRLKEEQTT. Positions 469-480 are enriched in low complexity; sequence AAKSSSHAAAAA.

In terms of tissue distribution, in young, mature and senescent leaves.

Its subcellular location is the nucleus. In terms of biological role, transcription factor that binds specifically to the W box (5'-(T)TGAC[CT]-3'), a frequently occurring elicitor-responsive cis-acting element. Has a positive role in resistance to necrotrophic pathogens (e.g. Botrytis cinerea), but a negative effect on plant resistance to biotrophic pathogens (e.g. Pseudomonas syringae). The chain is Probable WRKY transcription factor 4 (WRKY4) from Arabidopsis thaliana (Mouse-ear cress).